The primary structure comprises 314 residues: Methenyltetrahydromethanopterin cyclohydrolase (314 aa).

Belongs to the MCH family.

Its subcellular location is the cytoplasm. It catalyses the reaction 5,10-methenyl-5,6,7,8-tetrahydromethanopterin + H2O = N(5)-formyl-5,6,7,8-tetrahydromethanopterin + H(+). It functions in the pathway one-carbon metabolism; methanogenesis from CO(2); 5,10-methenyl-5,6,7,8-tetrahydromethanopterin from CO(2): step 3/3. Its function is as follows. Catalyzes the reversible interconversion of 5-formyl-H(4)MPT to methenyl-H(4)MPT(+). In Methanoregula boonei (strain DSM 21154 / JCM 14090 / 6A8), this protein is Methenyltetrahydromethanopterin cyclohydrolase.